Here is a 993-residue protein sequence, read N- to C-terminus: Receptor-type tyrosine-protein kinase FLT3 (993 aa).

Residues 1-26 form the signal peptide; it reads MPALARDGGQLPLLVVFSAMIFGTIT. Residues 27 to 543 lie on the Extracellular side of the membrane; it reads NQDLPVIKCV…PFPFIQDNIS (517 aa). The cysteines at positions 35 and 65 are disulfide-linked. Residues Asn43 and Asn100 are each glycosylated (N-linked (GlcNAc...) asparagine). Cys103 and Cys114 form a disulfide bridge. An N-linked (GlcNAc...) asparagine glycan is attached at Asn151. 3 disulfides stabilise this stretch: Cys199/Cys206, Cys232/Cys241, and Cys272/Cys330. In terms of domain architecture, Ig-like C2-type spans 253–343; the sequence is PQTTLPQLFL…KHPSQSALVT (91 aa). Residues Asn306, Asn323, Asn351, and Asn354 are each glycosylated (N-linked (GlcNAc...) asparagine). 2 cysteine pairs are disulfide-bonded: Cys368-Cys407 and Cys381-Cys392. N-linked (GlcNAc...) asparagine glycosylation is found at Asn473, Asn502, and Asn541. A helical transmembrane segment spans residues 544-563; it reads FYATIGVCLLFIVVLTLLIC. Residues 564–993 are Cytoplasmic-facing; sequence HKYKKQFRYE…LSPQAQVEDS (430 aa). Tyr572 carries the post-translational modification Phosphotyrosine. Phosphoserine is present on Ser574. 3 positions are modified to phosphotyrosine; by autocatalysis: Tyr589, Tyr591, and Tyr599. The tract at residues 591 to 597 is important for normal regulation of the kinase activity and for maintaining the kinase in an inactive state in the absence of bound ligand; that stretch reads YVDFREY. Residues 610 to 943 enclose the Protein kinase domain; that stretch reads LEFGKVLGSG…PSFPNLTSFL (334 aa). ATP-binding positions include 616–624 and Lys644; that span reads LGSGAFGKV. Position 726 is a phosphotyrosine; by autocatalysis (Tyr726). Phosphoserine is present on Ser759. Tyr768 and Tyr793 each carry phosphotyrosine. The active-site Proton acceptor is Asp811. Residues Tyr842, Tyr955, and Tyr969 each carry the phosphotyrosine; by autocatalysis modification. Ser993 bears the Phosphoserine mark.

The protein belongs to the protein kinase superfamily. Tyr protein kinase family. CSF-1/PDGF receptor subfamily. As to quaternary structure, monomer in the absence of bound FLT3LG. Homodimer in the presence of bound FLT3LG. Interacts with FIZ1 following ligand activation. Interacts with FES, FER, LYN, FGR, HCK, SRC and GRB2. Interacts with PTPRJ/DEP-1 and PTPN11/SHP2. Interacts with RNF115 and RNF126. In terms of assembly, (Microbial infection) Interacts with human cytomegalovirus protein UL7. N-glycosylated, contains complex N-glycans with sialic acid. In terms of processing, autophosphorylated on several tyrosine residues in response to FLT3LG binding. FLT3LG binding also increases phosphorylation of mutant kinases that are constitutively activated. Dephosphorylated by PTPRJ/DEP-1, PTPN1, PTPN6/SHP-1, and to a lesser degree by PTPN12. Dephosphorylation is important for export from the endoplasmic reticulum and location at the cell membrane. Post-translationally, rapidly ubiquitinated by UBE2L6 and the E3 ubiquitin-protein ligase SIAH1 after autophosphorylation, leading to its proteasomal degradation. As to expression, detected in bone marrow, in hematopoietic stem cells, in myeloid progenitor cells and in granulocyte/macrophage progenitor cells (at protein level). Detected in bone marrow, liver, thymus, spleen and lymph node, and at low levels in kidney and pancreas. Highly expressed in T-cell leukemia.

It is found in the membrane. The protein resides in the endoplasmic reticulum lumen. It carries out the reaction L-tyrosyl-[protein] + ATP = O-phospho-L-tyrosyl-[protein] + ADP + H(+). Its activity is regulated as follows. Present in an inactive conformation in the absence of bound ligand. FLT3LG binding leads to dimerization and activation by autophosphorylation. In terms of biological role, tyrosine-protein kinase that acts as a cell-surface receptor for the cytokine FLT3LG and regulates differentiation, proliferation and survival of hematopoietic progenitor cells and of dendritic cells. Promotes phosphorylation of SHC1 and AKT1, and activation of the downstream effector MTOR. Promotes activation of RAS signaling and phosphorylation of downstream kinases, including MAPK1/ERK2 and/or MAPK3/ERK1. Promotes phosphorylation of FES, FER, PTPN6/SHP, PTPN11/SHP-2, PLCG1, and STAT5A and/or STAT5B. Activation of wild-type FLT3 causes only marginal activation of STAT5A or STAT5B. Mutations that cause constitutive kinase activity promote cell proliferation and resistance to apoptosis via the activation of multiple signaling pathways. The polypeptide is Receptor-type tyrosine-protein kinase FLT3 (FLT3) (Homo sapiens (Human)).